The sequence spans 259 residues: UPF0246 protein PFL_1025 (259 aa).

Belongs to the UPF0246 family.

The chain is UPF0246 protein PFL_1025 from Pseudomonas fluorescens (strain ATCC BAA-477 / NRRL B-23932 / Pf-5).